We begin with the raw amino-acid sequence, 518 residues long: Kelch repeat and BTB domain-containing protein 4 (518 aa).

In terms of domain architecture, BTB spans 45 to 112; the sequence is ADVTISVEGR…IYHGTVKLRA (68 aa). A BACK domain is found at 147-239; that stretch reads CLQVMWLADR…SLKEIGENVH (93 aa). Kelch repeat units lie at residues 239–285, 286–328, 331–378, 380–430, and 432–481; these read HIYL…KHGG, DLYV…SVPG, AIYS…NLNG, IYLL…VHKD, and VFIV…VFRD.

In terms of assembly, component of the BCR(KBTBD4) E3 ubiquitin ligase complex, at least composed of CUL3, KBTBD4 and RBX1.

Substrate-specific adapter of a BCR (BTB-CUL3-RBX1) E3 ubiquitin ligase complex which targets CoREST corepressor complex components RCOR1, KDM1A/LSD1 and HDAC2 for proteasomal degradation. RCOR1 is likely to be the primary target while degradation of KDM1A and HDAC2 is likely due to their association with RCOR1. Also targets RCOR3, MIER2 and MIER3 for proteasomal degradation as well as associated proteins ZNF217 and RREB1. Degradation is dependent on the presence of an ELM2 domain in the target proteins. The chain is Kelch repeat and BTB domain-containing protein 4 (KBTBD4) from Pongo abelii (Sumatran orangutan).